A 485-amino-acid polypeptide reads, in one-letter code: Aspartyl/glutamyl-tRNA(Asn/Gln) amidotransferase subunit B (485 aa).

The protein belongs to the GatB/GatE family. GatB subfamily. In terms of assembly, heterotrimer of A, B and C subunits.

The catalysed reaction is L-glutamyl-tRNA(Gln) + L-glutamine + ATP + H2O = L-glutaminyl-tRNA(Gln) + L-glutamate + ADP + phosphate + H(+). The enzyme catalyses L-aspartyl-tRNA(Asn) + L-glutamine + ATP + H2O = L-asparaginyl-tRNA(Asn) + L-glutamate + ADP + phosphate + 2 H(+). In terms of biological role, allows the formation of correctly charged Asn-tRNA(Asn) or Gln-tRNA(Gln) through the transamidation of misacylated Asp-tRNA(Asn) or Glu-tRNA(Gln) in organisms which lack either or both of asparaginyl-tRNA or glutaminyl-tRNA synthetases. The reaction takes place in the presence of glutamine and ATP through an activated phospho-Asp-tRNA(Asn) or phospho-Glu-tRNA(Gln). This is Aspartyl/glutamyl-tRNA(Asn/Gln) amidotransferase subunit B from Cupriavidus pinatubonensis (strain JMP 134 / LMG 1197) (Cupriavidus necator (strain JMP 134)).